Here is a 469-residue protein sequence, read N- to C-terminus: uncharacterized protein (469 aa).

The tract at residues 203–244 is disordered; sequence ACPVPPQGHASSAADQAGVPERGRKRAHEGPGAGEAASAGRG.

It belongs to the epstein-barr virus LF1 family.

This is an uncharacterized protein from Homo sapiens (Human).